The following is a 269-amino-acid chain: Ubiquinone/menaquinone biosynthesis C-methyltransferase UbiE (269 aa).

Residues threonine 92, aspartate 113, and 141 to 142 (NA) each bind S-adenosyl-L-methionine.

This sequence belongs to the class I-like SAM-binding methyltransferase superfamily. MenG/UbiE family.

It carries out the reaction a 2-demethylmenaquinol + S-adenosyl-L-methionine = a menaquinol + S-adenosyl-L-homocysteine + H(+). It catalyses the reaction a 2-methoxy-6-(all-trans-polyprenyl)benzene-1,4-diol + S-adenosyl-L-methionine = a 5-methoxy-2-methyl-3-(all-trans-polyprenyl)benzene-1,4-diol + S-adenosyl-L-homocysteine + H(+). It participates in quinol/quinone metabolism; menaquinone biosynthesis; menaquinol from 1,4-dihydroxy-2-naphthoate: step 2/2. Its pathway is cofactor biosynthesis; ubiquinone biosynthesis. Its function is as follows. Methyltransferase required for the conversion of demethylmenaquinol (DMKH2) to menaquinol (MKH2) and the conversion of 2-polyprenyl-6-methoxy-1,4-benzoquinol (DDMQH2) to 2-polyprenyl-3-methyl-6-methoxy-1,4-benzoquinol (DMQH2). This Brucella suis (strain ATCC 23445 / NCTC 10510) protein is Ubiquinone/menaquinone biosynthesis C-methyltransferase UbiE.